The primary structure comprises 427 residues: UDP-N-acetylglucosamine 1-carboxyvinyltransferase (427 aa).

Phosphoenolpyruvate is bound at residue 22–23; it reads KN. Arg-92 is a binding site for UDP-N-acetyl-alpha-D-glucosamine. Catalysis depends on Asp-116, which acts as the Proton donor. UDP-N-acetyl-alpha-D-glucosamine contacts are provided by Asp-312 and Met-334.

It belongs to the EPSP synthase family. MurA subfamily.

The protein localises to the cytoplasm. It carries out the reaction phosphoenolpyruvate + UDP-N-acetyl-alpha-D-glucosamine = UDP-N-acetyl-3-O-(1-carboxyvinyl)-alpha-D-glucosamine + phosphate. It functions in the pathway cell wall biogenesis; peptidoglycan biosynthesis. Functionally, cell wall formation. Adds enolpyruvyl to UDP-N-acetylglucosamine. This Borrelia garinii subsp. bavariensis (strain ATCC BAA-2496 / DSM 23469 / PBi) (Borreliella bavariensis) protein is UDP-N-acetylglucosamine 1-carboxyvinyltransferase.